A 207-amino-acid polypeptide reads, in one-letter code: FMN-dependent NADH:quinone oxidoreductase (207 aa).

FMN is bound by residues Ser-10, 16 to 18 (SIS), 96 to 99 (MYNL), and 141 to 144 (SRGG).

Belongs to the azoreductase type 1 family. Homodimer. The cofactor is FMN.

The catalysed reaction is 2 a quinone + NADH + H(+) = 2 a 1,4-benzosemiquinone + NAD(+). It catalyses the reaction N,N-dimethyl-1,4-phenylenediamine + anthranilate + 2 NAD(+) = 2-(4-dimethylaminophenyl)diazenylbenzoate + 2 NADH + 2 H(+). Functionally, quinone reductase that provides resistance to thiol-specific stress caused by electrophilic quinones. Its function is as follows. Also exhibits azoreductase activity. Catalyzes the reductive cleavage of the azo bond in aromatic azo compounds to the corresponding amines. This chain is FMN-dependent NADH:quinone oxidoreductase, found in Nostoc sp. (strain PCC 7120 / SAG 25.82 / UTEX 2576).